The chain runs to 149 residues: 3-hydroxyacyl-[acyl-carrier-protein] dehydratase FabZ (149 aa).

Residue His-53 is part of the active site.

Belongs to the thioester dehydratase family. FabZ subfamily.

The protein localises to the cytoplasm. The catalysed reaction is a (3R)-hydroxyacyl-[ACP] = a (2E)-enoyl-[ACP] + H2O. Its function is as follows. Involved in unsaturated fatty acids biosynthesis. Catalyzes the dehydration of short chain beta-hydroxyacyl-ACPs and long chain saturated and unsaturated beta-hydroxyacyl-ACPs. This is 3-hydroxyacyl-[acyl-carrier-protein] dehydratase FabZ from Neisseria gonorrhoeae (strain ATCC 700825 / FA 1090).